The sequence spans 752 residues: MENLESRLKNAPYFRCEKGTDSIPLCRKCETRVLAWKIFSTKEWFCRINDISQRRFLVGILKQLNSLYLLHYFQNILQTTQGKDFIYNRSRIDLSKKEGKVVKSSLNQMLDKTVEQKMKEILYWFANSTQWTKANYTLLLLQMCNPKLLLTAANVIRVLFLREENNISGLNQDITDVCFSPEKDHSSKSATSQVYWTAKTQHTSLPLSKAPENEHFLGAASNPEEPWRNSLRCISEMNRLFSGKADITKPGYDPCNLLVDLDDIRDLSSGFSKYRDFIRYLPIHLSKYILRMLDRHTLNKCASVSQHWAAMAQQVKMDLSAHGFIQNQITFLQGSYTRGIDPNYANKVSIPVPKMVDDGKSMRVKHPKWKLRTKNEYNLWTAYQNEETQQVLMEERNVFCGTYNVRILSDTWDQNRVIHYSGGDLIAVSSNRKIHLLDIIQVKAIPVEFRGHAGSVRALFLCEEENFLLSGSYDLSIRYWDLKSGVCTRIFGGHQGTITCMDLCKNRLVSGGRDCQVKVWDVDTGKCLKTFRHKDPILATRINDTYIVSSCERGLVKVWHIAMAQLVKTLSGHEGAVKCLFFDQWHLLSGSTDGLVMAWSMVGKYERCLMAFKHPKEVLDVSLLFLRVISACADGKIRIYNFFNGNCMKVIKANGRGDPVLSFFIQGNRISVCHISTFAKRINVGWNGIEPSATAQGGNASLTECAHVRLHIAGHLPASRLPVAAVQPMTGGMAPTTAPTHVLAMLILFSGV.

WD repeat units lie at residues glycine 169 to proline 206, glycine 451 to isoleucine 490, glycine 493 to arginine 532, lysine 534 to threonine 569, glycine 572 to leucine 609, and alanine 611 to lysine 652.

Expressed in pancreas, heart and skeletal muscle.

The protein is F-box and WD repeat domain containing protein 10B of Homo sapiens (Human).